The sequence spans 785 residues: Probable ATP-dependent RNA helicase ddx17 (785 aa).

Composition is skewed to low complexity over residues 1–11 (MSYNSSNSGSG), 18–37 (SGNSSYSSTSRGGSSYGNRS), 49–95 (SYNR…YGPS), and 105–177 (GSSS…NGYS). Positions 1–233 (MSYNSSNSGS…TPSTSYNGGS (233 aa)) are disordered. A compositionally biased stretch (polar residues) spans 178 to 191 (KPTSNYSYSNGYTG). Low complexity predominate over residues 192–233 (PTTNYSSYSNGYSTPPTSTSTSSSSTTTTTTTTPSTSYNGGS). Positions 384–412 (MQFTQAPFPGYLMKEIIGAGFPNPTPIQS) match the Q motif motif. The Helicase ATP-binding domain maps to 415–590 (WPIALKGRDI…HDFLTDHIQV (176 aa)). Residue 428–435 (AKTGSGKT) coordinates ATP. The short motif at 538-541 (DEAD) is the DEAD box element. In terms of domain architecture, Helicase C-terminal spans 602-763 (NVRQIVEVCQ…KIPIELSNLS (162 aa)). Residues 764–774 (VTPSTSSNTKK) show a composition bias toward polar residues. The tract at residues 764-785 (VTPSTSSNTKKFSPYPTYSKRY) is disordered.

Belongs to the DEAD box helicase family. DDX5/DBP2 subfamily.

It is found in the cytoplasm. Its subcellular location is the nucleus. It carries out the reaction ATP + H2O = ADP + phosphate + H(+). Probable ATP-dependent RNA helicase which may be involved nonsense-mediated mRNA decay and ribosome biogenesis through rRNA processing. This is Probable ATP-dependent RNA helicase ddx17 (ddx17) from Dictyostelium discoideum (Social amoeba).